The chain runs to 186 residues: Der GTPase-activating protein YihI (186 aa).

A disordered region spans residues 1–65 (MARTKKTRRI…AGSRHSAVDT (65 aa)). 2 stretches are compositionally biased toward basic and acidic residues: residues 9-25 (RITD…RPEN) and 34-45 (TRYELDAKSREE).

It belongs to the YihI family. As to quaternary structure, interacts with Der.

A GTPase-activating protein (GAP) that modifies Der/EngA GTPase function. May play a role in ribosome biogenesis. This is Der GTPase-activating protein YihI from Histophilus somni (strain 129Pt) (Haemophilus somnus).